The primary structure comprises 1133 residues: SH3 and PX domain-containing protein 2A (1133 aa).

Residues 4–128 (YCVQDATVVD…RFFEARPEDV (125 aa)) enclose the PX domain. The 60-residue stretch at 166–225 (MILEQYVVVSNYKKQENSELSLQAGEVVDVIEKNESGWWFVSTSEEQGWVPATYLEAQNG) folds into the SH3 1 domain. Phosphothreonine is present on Thr256. Positions 266-325 (SREEKYVTVQPYTSQSKDEIGFEKGVTVEVIRKNLEGWWYIRYLGKEGWAPASYLKKAKD) constitute an SH3 2 domain. 2 positions are modified to phosphoserine: Ser406 and Ser421. 4 disordered regions span residues 415–446 (QRAQISSPNLRTRPPPRRESSLGFQLPKPPEP), 505–840 (RKKP…EWEG), 899–924 (NEQPDPSGKELDTVPAKGRQNEGKSD), and 941–964 (QSKKATPPIPSKPPGGFGKTSGTP). The SH3 3 domain occupies 448-507 (SVEVEYYTIAEFQSCISDGISFRGGQKAEVIDKNSGGWWYVQIGEKEGWAPASYIDKRKK). Positions 546 to 555 (DSPRKLKYEE) are enriched in basic and acidic residues. A phosphoserine mark is found at Ser547 and Ser567. Residues 567–576 (SEPELSEEPV) are compositionally biased toward acidic residues. The segment covering 577–586 (EDRASGERRP) has biased composition (basic and acidic residues). Ser593 is subject to Phosphoserine. Residues 608–620 (SSEDVALEEETIY) show a composition bias toward acidic residues. Low complexity-rich tracts occupy residues 634 to 652 (SARGSSGDSDSPGSSSLSL), 658 to 670 (PKSGSPKSSSLLK), and 686 to 715 (SSASFSSSITINTTCCSSSSSSSSSLSKTS). Residue Ser644 is modified to Phosphoserine. Position 731 is a phosphothreonine (Thr731). Ser767, Ser769, and Ser819 each carry phosphoserine. Phosphothreonine is present on Thr829. The SH3 4 domain maps to 840-899 (GPATSYMTCSAYQKVQDSEISFPAGVEVQVLEKQESGWWYVRFGELEGWAPSHYLVLDEN). Residues 917 to 946 (RQNEGKSDSLEKIERRVQALNTVNQSKKAT) adopt a coiled-coil conformation. Phosphoserine is present on residues Ser1002, Ser1016, Ser1017, and Ser1038. The tract at residues 1029–1059 (KGRLAERAASQGSDSPLLPAQRNSIPVSPVR) is disordered. The SH3 5 domain maps to 1072–1133 (NLKDVYVSIA…VPSNYLEKKN (62 aa)).

Belongs to the SH3PXD2 family. Interacts (via N-terminus) with CYBA. Interacts with ADAM12, ADAM15 and ADAM19. Interacts with NOXO1. Interacts (via SH3 domains) with NOXA1. Interacts with FASLG. Interacts (via PX domain) with RAB40B (GTP-bound); interaction promotes invadopodia-mediated extracellular matrix degradation. Tyrosine phosphorylated by SRC. Phosphorylation plays a regulatory role in the protein localization. The intramolecular interaction of the PX domain with the third SH3 domain maintains the protein in the cytoplasm and phosphorylation disrupts this interaction, resulting in the redistribution of the protein from cytoplasm to the perimembrane region. Phosphorylated on serine upon DNA damage, probably by ATM or ATR. In terms of tissue distribution, found in several cancer cell lines, particularly invasive breast carcinomas and melanomas.

It is found in the cytoplasm. The protein resides in the cell projection. The protein localises to the podosome. Its function is as follows. Adapter protein involved in invadopodia and podosome formation, extracellular matrix degradation and invasiveness of some cancer cells. Binds matrix metalloproteinases (ADAMs), NADPH oxidases (NOXs) and phosphoinositides. Acts as an organizer protein that allows NOX1- or NOX3-dependent reactive oxygen species (ROS) generation and ROS localization. In association with ADAM12, mediates the neurotoxic effect of amyloid-beta peptide. The sequence is that of SH3 and PX domain-containing protein 2A from Homo sapiens (Human).